An 817-amino-acid polypeptide reads, in one-letter code: Coiled-coil domain-containing protein 175 (817 aa).

Coiled-coil stretches lie at residues 130–166 (ILEI…ALGI) and 217–594 (LQDA…KQEE). The interval 761–817 (EEESPSSLSKEDLQKAGMKQKEEKTLRFSPSLHTRRDTLSRNCKMIKKRSRSPKNKP) is disordered. Basic and acidic residues predominate over residues 769-786 (SKEDLQKAGMKQKEEKTL). Over residues 804–817 (KMIKKRSRSPKNKP) the composition is skewed to basic residues.

This Rattus norvegicus (Rat) protein is Coiled-coil domain-containing protein 175 (Ccdc175).